Consider the following 266-residue polypeptide: MFVELNNLLNTTPDRAEQGKLTLLCDAKTDGSFLVHHFLSFYLKANCKVCFVALIQSFSHYSIVGQKLGVSLTMARERGQLVFLEGLKSAVDVVFQAQKEPHPLQFLREANAGNLKPLFEFVREALKPVDSGEARWTYPVLLVDDLSVLLSLGMGAVAVLDFIHYCRATVCWELKGNMVVLVHDSGDAEDEENDILLNGLSHQSHLILRAEGLATGFCRDVHGQLRILWRRPSQPAVHRDQSFTYQYKIQDKSVSFFAKGMSPAVL.

The protein belongs to the ELP6 family. Component of the elongator complex which consists of ELP1, ELP2, ELP3, ELP4, ELP5 and ELP6.

It is found in the cytoplasm. The protein localises to the nucleus. Its pathway is tRNA modification; 5-methoxycarbonylmethyl-2-thiouridine-tRNA biosynthesis. Functionally, component of the elongator complex which is required for multiple tRNA modifications, including mcm5U (5-methoxycarbonylmethyl uridine), mcm5s2U (5-methoxycarbonylmethyl-2-thiouridine), and ncm5U (5-carbamoylmethyl uridine). The elongator complex catalyzes formation of carboxymethyluridine in the wobble base at position 34 in tRNAs. Involved in cell migration. This is Elongator complex protein 6 from Homo sapiens (Human).